Consider the following 389-residue polypeptide: Serpin B13 (389 aa).

Belongs to the serpin family. Ov-serpin subfamily.

The protein localises to the cytoplasm. In terms of biological role, may play a role in the proliferation or differentiation of keratinocytes. The protein is Serpin B13 (Serpinb13) of Mus musculus (Mouse).